The following is a 380-amino-acid chain: Putative 8-amino-7-oxononanoate synthase (380 aa).

Arginine 18 is a binding site for substrate. 105–106 lines the pyridoxal 5'-phosphate pocket; that stretch reads GY. Histidine 130 is a substrate binding site. Residues serine 178, 204–207, and 235–238 contribute to the pyridoxal 5'-phosphate site; these read DEAH and TFGK. An N6-(pyridoxal phosphate)lysine modification is found at lysine 238. Position 352 (threonine 352) interacts with substrate.

The protein belongs to the class-II pyridoxal-phosphate-dependent aminotransferase family. BioF subfamily. In terms of assembly, homodimer. The cofactor is pyridoxal 5'-phosphate.

It carries out the reaction 6-carboxyhexanoyl-[ACP] + L-alanine + H(+) = (8S)-8-amino-7-oxononanoate + holo-[ACP] + CO2. Its pathway is cofactor biosynthesis; biotin biosynthesis. Its function is as follows. Catalyzes the decarboxylative condensation of pimeloyl-[acyl-carrier protein] and L-alanine to produce 8-amino-7-oxononanoate (AON), [acyl-carrier protein], and carbon dioxide. In Glaesserella parasuis serovar 5 (strain SH0165) (Haemophilus parasuis), this protein is Putative 8-amino-7-oxononanoate synthase (bioF).